Consider the following 207-residue polypeptide: Claudin-11 (207 aa).

A topological domain (cytoplasmic) is located at residue Met1. The chain crosses the membrane as a helical span at residues 2–22; sequence VATCLQVVGFVTSFVGWIGVI. Over 23–82 the chain is Extracellular; the sequence is VTTSTNDWVVTCGYTIPTCRKLDELGSKGLWADCVMATGLYHCKPLVDILILPGYVQACR. The helical transmembrane segment at 83-103 threads the bilayer; sequence ALMIAASVLGLPAILLLLTVL. Residues 104–122 are Cytoplasmic-facing; it reads PCIRMGQEPGVAKYRRAQL. A helical membrane pass occupies residues 123–143; the sequence is AGVLLILLALCALVATIWFPV. The Extracellular segment spans residues 144–157; sequence CAHRETTIVSFGYS. A helical transmembrane segment spans residues 158–178; that stretch reads LYAGWIGAVLCLVGGCVILCC. Residues 179–207 lie on the Cytoplasmic side of the membrane; it reads AGDAQAFGENRFYYTAGSSSPTHAKSAHV. 2 positions are modified to phosphoserine: Ser197 and Ser198.

Belongs to the claudin family. As to quaternary structure, interacts with tetraspanin-3/TSPAN3. Interacts with OCLN.

The protein resides in the cell junction. Its subcellular location is the tight junction. The protein localises to the cell membrane. Functionally, plays a major role in tight junction-specific obliteration of the intercellular space, through calcium-independent cell-adhesion activity. The polypeptide is Claudin-11 (CLDN11) (Homo sapiens (Human)).